The primary structure comprises 472 residues: Diaminopimelate decarboxylase (472 aa).

Residues 1 to 23 form a disordered region; the sequence is MNVHTAGPRHAEKTRHTATPQRV. N6-(pyridoxal phosphate)lysine is present on Lys-97. Pyridoxal 5'-phosphate-binding positions include Gly-283 and 325-328; that span reads EPGR. Arg-328, Arg-369, and Tyr-373 together coordinate substrate. The active-site Proton donor is the Cys-400. Positions 401 and 430 each coordinate substrate. Tyr-430 is a binding site for pyridoxal 5'-phosphate.

This sequence belongs to the Orn/Lys/Arg decarboxylase class-II family. LysA subfamily. Homodimer. Requires pyridoxal 5'-phosphate as cofactor.

It catalyses the reaction meso-2,6-diaminopimelate + H(+) = L-lysine + CO2. It participates in amino-acid biosynthesis; L-lysine biosynthesis via DAP pathway; L-lysine from DL-2,6-diaminopimelate: step 1/1. Its function is as follows. Specifically catalyzes the decarboxylation of meso-diaminopimelate (meso-DAP) to L-lysine. In Mycobacterium leprae (strain TN), this protein is Diaminopimelate decarboxylase.